The primary structure comprises 922 residues: Disintegrin and metalloproteinase domain-containing protein 10 homolog (922 aa).

The first 26 residues, 1-26 (MSSPIRNRLQLVVTLIFCLFFENVNG), serve as a signal peptide directing secretion. The propeptide occupies 27–228 (LNNFIDNFET…YMTMGGRSKR (202 aa)). Residues asparagine 74, asparagine 185, and asparagine 346 are each glycosylated (N-linked (GlcNAc...) asparagine). Topologically, residues 229 to 745 (ANTLRDHDGL…ETLTQWAQDN (517 aa)) are extracellular. The region spanning 242-480 (RTCSLYMQAD…CSVKNISAVL (239 aa)) is the Peptidase M12B domain. Histidine 426 is a Zn(2+) binding site. Residue glutamate 427 is part of the active site. The Zn(2+) site is built by histidine 430 and histidine 436. Cysteine 442 and cysteine 471 are disulfide-bonded. N-linked (GlcNAc...) asparagine glycosylation occurs at asparagine 475. One can recognise a Disintegrin domain in the interval 511–615 (SAFCGNQIYE…QCPVSPPKHD (105 aa)). 5 disulfide bridges follow: cysteine 542-cysteine 577, cysteine 564-cysteine 572, cysteine 588-cysteine 607, cysteine 594-cysteine 626, and cysteine 619-cysteine 631. A glycan (N-linked (GlcNAc...) asparagine) is linked at asparagine 632. 4 cysteine pairs are disulfide-bonded: cysteine 636–cysteine 659, cysteine 644–cysteine 665, cysteine 655–cysteine 707, and cysteine 700–cysteine 713. The N-linked (GlcNAc...) asparagine glycan is linked to asparagine 677. Residues 746-766 (WWVVGVGGLVFLVIMALFVKC) traverse the membrane as a helical segment. Residues 767–922 (CAVHTPSTNP…SGNGGKKKGK (156 aa)) are Cytoplasmic-facing. Disordered stretches follow at residues 797 to 837 (QHRQ…PSAP) and 864 to 922 (PGSS…KKGK). Low complexity predominate over residues 805–834 (AAGSVPPGPGAQPRSGAASAPSRTTPSARP).

May interact with tetraspanin tsp-12; the interaction promotes sup-17 cell membrane localization. It depends on Zn(2+) as a cofactor. In terms of tissue distribution, expressed in the germline.

The protein localises to the cell membrane. Its subcellular location is the basolateral cell membrane. It is found in the cytoplasmic vesicle membrane. It catalyses the reaction Endopeptidase of broad specificity.. Metalloprotease. Acts together with protease adm-4 and in a cell autonomous manner to facilitate lin-12/Notch signaling during developmental cell fate decision, including anchor cell/ventral uterine precursor cell decision and vulva precursor cell specification. By modulating glp-1/Notch signaling, plays a role in germline development. Probably by modulating BMP-like Sma/Mab signaling via the shedding of unc-40 ectodomain, involved in the regulation of body size and mesoderm development. Probably by shedding ephrin efn-4, regulates axon guidance of SDQL neuron during development. The chain is Disintegrin and metalloproteinase domain-containing protein 10 homolog from Caenorhabditis elegans.